The following is a 306-amino-acid chain: Glutaminase (306 aa).

Substrate contacts are provided by S66, N116, E159, N166, Y190, Y242, and V260.

This sequence belongs to the glutaminase family. As to quaternary structure, homotetramer.

The enzyme catalyses L-glutamine + H2O = L-glutamate + NH4(+). The protein is Glutaminase of Caulobacter vibrioides (strain ATCC 19089 / CIP 103742 / CB 15) (Caulobacter crescentus).